The chain runs to 207 residues: Testis-expressed protein 35 (207 aa).

Residues 43–79 (RKGMTRELKNELREVREQLTEKMEEIKQIKDIMDKDF) are a coiled coil.

In terms of tissue distribution, testis-specific. Expressed during spermatogenesis.

The protein localises to the nucleus. The sequence is that of Testis-expressed protein 35 (Tex35) from Mus musculus (Mouse).